The sequence spans 322 residues: MTMPTNQCPWRMQVHHITQETPDVWTISLICHDYYPYRAGQYALVSVRNSAETLRAYTISSTPGVSEYITLTVRRIDDGVGSQWLTRDVKRGDYLWLSDAMGEFTCDDKAEDKFLLLAAGCGVTPIMSMRRWLAKNRPQADVRVIYNVRTPQDVIFADEWRNYPVTLVAENNVTEGFIAGRLTRELLAGVPDLASRTVMTCGPAPYMDWVEQEVKALGVTRFFKEKFFTPVAEAATSGLKFTKLQPAREFYAPVGTTLLEALESNNVPVVAACRAGVCGCCKTKVVSGEYTVSSTMTLTDAEIAEGYVLACSCHPQGDLVLA.

Residues 7–107 form the FAD-binding FR-type domain; that stretch reads QCPWRMQVHH…SDAMGEFTCD (101 aa). Positions 111 to 213 are oxidoreductase; the sequence is EDKFLLLAAG…APYMDWVEQE (103 aa). The 86-residue stretch at 237-322 folds into the 2Fe-2S ferredoxin-type domain; sequence SGLKFTKLQP…CHPQGDLVLA (86 aa). [2Fe-2S] cluster is bound by residues C273, C278, C281, and C311.

It in the N-terminal section; belongs to the FAD-binding oxidoreductase type 6 family. Requires [2Fe-2S] cluster as cofactor. FAD is required as a cofactor.

In terms of biological role, NADH oxidoreductase acting in concert with HCP. This Escherichia coli (strain K12) protein is NADH oxidoreductase HCR (hcr).